Here is a 244-residue protein sequence, read N- to C-terminus: Small ribosomal subunit protein uS3 (244 aa).

The KH type-2 domain maps to 39 to 107; that stretch reads MRKFVMSELK…ETHLNIVEVR (69 aa). The disordered stretch occupies residues 214–244; that stretch reads ASERRALEGDAQGPASRERDRGDRRRERDNA. A compositionally biased stretch (basic and acidic residues) spans 229-244; sequence SRERDRGDRRRERDNA.

This sequence belongs to the universal ribosomal protein uS3 family. As to quaternary structure, part of the 30S ribosomal subunit. Forms a tight complex with proteins S10 and S14.

Its function is as follows. Binds the lower part of the 30S subunit head. Binds mRNA in the 70S ribosome, positioning it for translation. This chain is Small ribosomal subunit protein uS3, found in Rhizobium etli (strain CIAT 652).